The primary structure comprises 481 residues: ATP synthase subunit beta (481 aa).

ATP is bound at residue 160–167 (GGAGVGKT).

It belongs to the ATPase alpha/beta chains family. As to quaternary structure, F-type ATPases have 2 components, CF(1) - the catalytic core - and CF(0) - the membrane proton channel. CF(1) has five subunits: alpha(3), beta(3), gamma(1), delta(1), epsilon(1). CF(0) has three main subunits: a(1), b(2) and c(9-12). The alpha and beta chains form an alternating ring which encloses part of the gamma chain. CF(1) is attached to CF(0) by a central stalk formed by the gamma and epsilon chains, while a peripheral stalk is formed by the delta and b chains.

Its subcellular location is the cell inner membrane. The catalysed reaction is ATP + H2O + 4 H(+)(in) = ADP + phosphate + 5 H(+)(out). Its function is as follows. Produces ATP from ADP in the presence of a proton gradient across the membrane. The catalytic sites are hosted primarily by the beta subunits. The chain is ATP synthase subunit beta from Myxococcus xanthus (strain DK1622).